The sequence spans 307 residues: MSGIQVLLVAGTHGNEINAPWLFEQWKQKDSLINTHNINIQTVIGNPVALEQGKRYVDRDLNRSFRKDLLLSSDLNAAEHFRALELVSEYGPNGNNPCQIAIDFHSTTSSMGSSLVVYGRRPADLAIVSLIQNHLGLPIYLHEGDNAQSGFLVESWPCGFVVEVGPVPQGLLHFQIINQTLLTLDSCLKEISNVINSKTVYPEQLIVHRHLKNIDFPRDSSGVPSSLVHKDIQGRDWYPIKNGHPLFESLSGDLTLLLEGGLEEEFVPVFINEAAYAEKNIAMSLTKKEMWDVQKDWINDLSKLLNP.

Residues His-13 and Glu-16 each coordinate Zn(2+). Residues Arg-55 and 62–63 (NR) each bind substrate. His-105 contacts Zn(2+). 2 residues coordinate substrate: Glu-163 and Tyr-276.

The protein belongs to the AspA/AstE family. Aspartoacylase subfamily. The cofactor is Zn(2+).

The enzyme catalyses an N-acyl-L-aspartate + H2O = a carboxylate + L-aspartate. In Prochlorococcus marinus (strain SARG / CCMP1375 / SS120), this protein is Probable aspartoacylase.